A 679-amino-acid polypeptide reads, in one-letter code: WD repeat-containing protein 48 homolog (679 aa).

8 WD repeats span residues 26–65 (QHRNGVNALQLDSNNGKLYSAGRDAIIRVWNTRTEANEKY), 71–110 (HHNDWVNDIVLCCNGRNLISASCDTTVKVWNAHKGFCMST), 113–152 (THRDYVQALAYAKDREQVASAGLDKAIFLWDVNTLTALTA), 164–203 (GSKDSIYSLAMNPSGTVIVSGSTENILRIWDPRTCMRSMK), 206–245 (GHTENVRCLVVSPDGNQVVSGSSDGTIKVWNLGQQRCIQT), 248–287 (VHKEGVWSLLMSENFQYIISGSRDRNIIVTEMRNPSNKML), 290–329 (EEKAPVLSLGYNIDKTGVWATTWNSDIRCWKLPMYDRCVL), and 349–388 (KGGAAIKECTVLNDKRYIITKDSQDQVVVYDVLRVTKKEE). Positions 594–615 (PSAGNANNSLQNSQSDANSEGS) are disordered.

This sequence belongs to the WD repeat WDR48 family. As to quaternary structure, catalytic component of the Usp12-46 deubiquitylase complex consisting of Usp12-46, Wdr20 and Uaf1; regulatory subunit that, together wtih Wdr20, stabilizes Usp12-46. The Usp12-46 deubiquitylase complex associates with arr/arrow; the interaction leads to deubiquitination and stabilization of arr/arrow.

Regulatory component of the Usp12-46 deubiquitylase complex. activates deubiquitination by increasing the catalytic turnover without increasing the affinity of deubiquitinating enzymes for the substrate. The complex deubiquitylates the wg/wingless-signaling receptor arr/arrow, which stabilizes the receptor and increases its concentration at the cell surface; this enhances the sensitivity of cells to wg/wingless-signal stimulation. This increases the amplitude and spatial range of the signaling response to the wg/wingless morphogen gradient, facilitating the precise concentration-dependent regulation of its target genes. Together with Wdr20 and Usp12-46 required for wg/wingless-mediated signaling in the wing imaginal disc and for wg/wingless-dependent regulation of intestinal stem cell proliferation. This chain is WD repeat-containing protein 48 homolog, found in Drosophila mojavensis (Fruit fly).